The chain runs to 269 residues: MLGLQIFTLLSIPTLLYTYELELLDLTRTPPEKELEYWCTYANHCRFCWDCQDGICKNKVFENHSPILENDYIANCSVFRRNEFCTYYVTSIKPHEVYRTECPQQSHEWHEAVIRKWQKLLTYGFYLVGCVLVANYVRKRSLQTVMYLLVLLVIFFLLSQLMLYRELEDKKHKIGSIPPKRELEHWCTHGKYCDFCWDCQNGICRNKVFKNHPPIGENDFIRHDCWTIHLPNRCYYQKIYKYPDYHMMECSQPTPYKWYDNLMKKQDMM.

Residue methionine 1 is a topological domain, cytoplasmic. The stretch at 1 to 145 (MLGLQIFTLL…YVRKRSLQTV (145 aa)) is one A repeat. Residues 2 to 18 (LGLQIFTLLSIPTLLYT) form a helical membrane-spanning segment. The Extracellular portion of the chain corresponds to 19-116 (YELELLDLTR…HEWHEAVIRK (98 aa)). N-linked (GlcNAc...) asparagine; by host glycosylation is present at asparagine 75. A helical membrane pass occupies residues 117–137 (WQKLLTYGFYLVGCVLVANYV). Residues 138–144 (RKRSLQT) are Cytoplasmic-facing. Residues 145 to 165 (VMYLLVLLVIFFLLSQLMLYR) traverse the membrane as a helical segment. Residues 147-269 (YLLVLLVIFF…DNLMKKQDMM (123 aa)) form a B repeat. The Extracellular portion of the chain corresponds to 166 to 269 (ELEDKKHKIG…DNLMKKQDMM (104 aa)).

This sequence belongs to the asfivirus MGF 110 family.

It is found in the host membrane. Its function is as follows. Plays a role in virus cell tropism, and may be required for efficient virus replication in macrophages. The polypeptide is Protein MGF 110-1L (African swine fever virus (isolate Tick/South Africa/Pretoriuskop Pr4/1996) (ASFV)).